The chain runs to 301 residues: Transcriptional activator FeaR (301 aa).

In terms of domain architecture, HTH araC/xylS-type spans 199–299; that stretch reads QKVVTLIDDN…GMTPGEYRRK (101 aa). 2 consecutive DNA-binding regions (H-T-H motif) follow at residues 217–238 and 266–289; these read EWIA…ADKG and LAGI…KQRF.

Functionally, positive regulator of tynA/maoA and feaB/padA, the genes for 2-phenylethylamine catabolism. This is Transcriptional activator FeaR (feaR) from Escherichia coli (strain K12).